The following is a 90-amino-acid chain: U7-theraphotoxin-Hhn1a 7 (90 aa).

The N-terminal stretch at 1-19 is a signal peptide; that stretch reads MKTAIFTVVLALAVFAVLS. A propeptide spanning residues 20 to 50 is cleaved from the precursor; sequence FGWEANEKALSEGFTELIHEKEAASETEARE. 3 disulfides stabilise this stretch: C51–C65, C58–C70, and C64–C81.

This sequence belongs to the neurotoxin 10 (Hwtx-1) family. 13 (Hntx-13) subfamily. In terms of tissue distribution, expressed by the venom gland.

It localises to the secreted. Functionally, ion channel inhibitor. This is U7-theraphotoxin-Hhn1a 7 from Cyriopagopus hainanus (Chinese bird spider).